The sequence spans 189 residues: Putative manganese efflux pump MntP (189 aa).

The next 6 membrane-spanning stretches (helical) occupy residues 2–22 (SLTELILLAIGLSMDASAVSI), 36–56 (ILQMAVMFAVFQGIMPLIGYY), 71–91 (WIAFILLVIIGGKMIHESITA), 106–126 (LLLVQAVATSIDALAVGVSLS), 132–152 (ILYSITIIGIVTFICCTAAIL), and 167–187 (IVGGLILVGIGVKIFVQHMFF).

Belongs to the MntP (TC 9.B.29) family.

The protein resides in the cell membrane. Functionally, probably functions as a manganese efflux pump. The sequence is that of Putative manganese efflux pump MntP from Ruminiclostridium cellulolyticum (strain ATCC 35319 / DSM 5812 / JCM 6584 / H10) (Clostridium cellulolyticum).